The chain runs to 245 residues: tRNA (guanine-N(1)-)-methyltransferase (245 aa).

S-adenosyl-L-methionine contacts are provided by residues G111 and 131 to 136 (IGDYVL).

The protein belongs to the RNA methyltransferase TrmD family. In terms of assembly, homodimer.

Its subcellular location is the cytoplasm. It carries out the reaction guanosine(37) in tRNA + S-adenosyl-L-methionine = N(1)-methylguanosine(37) in tRNA + S-adenosyl-L-homocysteine + H(+). Its function is as follows. Specifically methylates guanosine-37 in various tRNAs. The polypeptide is tRNA (guanine-N(1)-)-methyltransferase (Staphylococcus haemolyticus (strain JCSC1435)).